We begin with the raw amino-acid sequence, 246 residues long: Ubiquitin-conjugating enzyme E2 6 (246 aa).

Residues 1–224 (MATKQAQKRL…LEKQHNDKPN (224 aa)) lie on the Cytoplasmic side of the membrane. Residues 5 to 154 (QAQKRLTKEY…FNSTRFKLVF (150 aa)) form the UBC core domain. The active-site Glycyl thioester intermediate is C87. Residues 225–245 (GSSSMFYIGVALFLFLVGLFM) traverse the membrane as a helical segment.

This sequence belongs to the ubiquitin-conjugating enzyme family.

The protein resides in the endoplasmic reticulum membrane. It catalyses the reaction S-ubiquitinyl-[E1 ubiquitin-activating enzyme]-L-cysteine + [E2 ubiquitin-conjugating enzyme]-L-cysteine = [E1 ubiquitin-activating enzyme]-L-cysteine + S-ubiquitinyl-[E2 ubiquitin-conjugating enzyme]-L-cysteine.. It participates in protein modification; protein ubiquitination. Functionally, catalyzes the covalent attachment of ubiquitin to other proteins. Functions in degradation of misfolded or regulated proteins localized in the endoplasmic reticulum (ER) lumen or membrane via the ubiquitin-proteasome system. Cognate E2 conjugating enzyme for the DOA10 ubiquitin ligase complex, which is part of the ERAD-C pathway responsible for the rapid degradation of membrane proteins with misfolded cytoplasmic domains. The chain is Ubiquitin-conjugating enzyme E2 6 (UBC6) from Candida glabrata (strain ATCC 2001 / BCRC 20586 / JCM 3761 / NBRC 0622 / NRRL Y-65 / CBS 138) (Yeast).